A 424-amino-acid polypeptide reads, in one-letter code: MEKQCCSHPVICSLSTMYTFLLGAIFIALSSSRILLVKYSANEENKYDYLPTTVNVCSELVKLVFCVLVSFCVIKKDHQSRNLKYASWKEFSDFMKWSIPAFLYFLDNLIVFYVLSYLQPAMAVIFSNFSIITTALLFRIVLKRRLNWIQWASLLTLFLSIVALTAGTKTLQHNLAGRGFHHDAFFSPSNSCLLFRSECPRKDNCTAKEWTFPEAKWNTTARVFSHIRLGMGHVLIIVQCFISSMANIYNEKILKEGNQLTESIFIQNSKLYFFGILFNGLTLGLQRSNRDQIKNCGFFYGHSAFSVALIFVTAFQGLSVAFILKFLDNMFHVLMAQVTTVIITTVSVLVFDFRPSLEFFLEAPSVLLSIFIYNASKPQVPEYAPRQERIRDLSGNLWERSSGDGEELERLTKPKSDESDEDTF.

At 1–8 (MEKQCCSH) the chain is on the cytoplasmic side. The helical transmembrane segment at 9–29 (PVICSLSTMYTFLLGAIFIAL) threads the bilayer. Topologically, residues 30–53 (SSSRILLVKYSANEENKYDYLPTT) are lumenal. The helical transmembrane segment at 54 to 74 (VNVCSELVKLVFCVLVSFCVI) threads the bilayer. Topologically, residues 75 to 93 (KKDHQSRNLKYASWKEFSD) are cytoplasmic. Residues 94-116 (FMKWSIPAFLYFLDNLIVFYVLS) traverse the membrane as a helical segment. Over 117-119 (YLQ) the chain is Lumenal. Residues 120 to 142 (PAMAVIFSNFSIITTALLFRIVL) form a helical membrane-spanning segment. The Cytoplasmic segment spans residues 143–147 (KRRLN). Residues 148–168 (WIQWASLLTLFLSIVALTAGT) form a helical membrane-spanning segment. The Lumenal portion of the chain corresponds to 169–228 (KTLQHNLAGRGFHHDAFFSPSNSCLLFRSECPRKDNCTAKEWTFPEAKWNTTARVFSHIR). N204 is a glycosylation site (N-linked (GlcNAc...) asparagine). Residues 229 to 249 (LGMGHVLIIVQCFISSMANIY) traverse the membrane as a helical segment. Residues 250 to 263 (NEKILKEGNQLTES) lie on the Cytoplasmic side of the membrane. A helical transmembrane segment spans residues 264 to 284 (IFIQNSKLYFFGILFNGLTLG). The Lumenal segment spans residues 285–303 (LQRSNRDQIKNCGFFYGHS). The helical transmembrane segment at 304-324 (AFSVALIFVTAFQGLSVAFIL) threads the bilayer. Residues 325–330 (KFLDNM) are Cytoplasmic-facing. The helical transmembrane segment at 331–351 (FHVLMAQVTTVIITTVSVLVF) threads the bilayer. The Lumenal portion of the chain corresponds to 352–354 (DFR). Residues 355–375 (PSLEFFLEAPSVLLSIFIYNA) traverse the membrane as a helical segment. Over 376–424 (SKPQVPEYAPRQERIRDLSGNLWERSSGDGEELERLTKPKSDESDEDTF) the chain is Cytoplasmic. Phosphoserine occurs at positions 394, 416, and 419. Positions 397 to 424 (LWERSSGDGEELERLTKPKSDESDEDTF) are disordered. Positions 408–417 (LERLTKPKSD) are enriched in basic and acidic residues.

This sequence belongs to the nucleotide-sugar transporter family. SLC35A subfamily. In terms of assembly, probably forms homooligomers and heterooligomers with SLC35A1, SLC35A2, SLC35A3 and SLC35A4.

The protein resides in the golgi apparatus membrane. It carries out the reaction UMP(out) + UDP-alpha-D-glucuronate(in) = UMP(in) + UDP-alpha-D-glucuronate(out). It catalyses the reaction UMP(out) + UDP-N-acetyl-alpha-D-glucosamine(in) = UMP(in) + UDP-N-acetyl-alpha-D-glucosamine(out). The catalysed reaction is UDP-N-acetyl-alpha-D-galactosamine(in) + UMP(out) = UDP-N-acetyl-alpha-D-galactosamine(out) + UMP(in). Its function is as follows. Probable UDP-sugar:UMP transmembrane antiporter involved in UDP-alpha-D-glucuronate/UDP-GlcA, UDP-GlcNAc/UDP-N-acetyl-alpha-D-glucosamine and UDP-N-acetyl-alpha-D-galactosamine/UDP-GalNAc transport from the cytosol to the lumen of the Golgi. The polypeptide is UDP-sugar transporter protein SLC35A5 (Homo sapiens (Human)).